The sequence spans 340 residues: Protein arginine N-methyltransferase 1 (340 aa).

Residues 16–311 (KDYYFDSYSH…TCKPAEGNHR (296 aa)) form the SAM-dependent MTase PRMT-type domain. Residue Tyr19 is modified to Phosphotyrosine. S-adenosyl-L-methionine-binding residues include His29, Arg38, Gly62, Asp84, and Glu113. Residues Glu128 and Glu137 contribute to the active site. Phosphoserine is present on Ser176.

It belongs to the class I-like SAM-binding methyltransferase superfamily. Protein arginine N-methyltransferase family. In terms of assembly, interacts with pab2.

The protein localises to the nucleus. It catalyses the reaction L-arginyl-[protein] + S-adenosyl-L-methionine = N(omega)-methyl-L-arginyl-[protein] + S-adenosyl-L-homocysteine + H(+). The catalysed reaction is L-arginyl-[protein] + 2 S-adenosyl-L-methionine = N(omega),N(omega)-dimethyl-L-arginyl-[protein] + 2 S-adenosyl-L-homocysteine + 2 H(+). Its function is as follows. S-adenosyl-L-methionine-dependent protein-arginine N-methyltransferase that catalyzes both the mono- and asymmetric (type I) dimethylation of the guanidino nitrogens of arginine residues in target proteins. Asymmetrically dimethylates the polyadenylate-binding protein pab2, modulating pab2 oligomerization. The chain is Protein arginine N-methyltransferase 1 from Schizosaccharomyces pombe (strain 972 / ATCC 24843) (Fission yeast).